A 365-amino-acid polypeptide reads, in one-letter code: Eukaryotic translation initiation factor 3 subunit H (365 aa).

Residues 11–160 (VKVEALVVMK…LRAFRLSPKF (150 aa)) form the MPN domain.

It belongs to the eIF-3 subunit H family. Component of the eukaryotic translation initiation factor 3 (eIF-3) complex.

The protein localises to the cytoplasm. Its function is as follows. Component of the eukaryotic translation initiation factor 3 (eIF-3) complex, which is involved in protein synthesis of a specialized repertoire of mRNAs and, together with other initiation factors, stimulates binding of mRNA and methionyl-tRNAi to the 40S ribosome. The eIF-3 complex specifically targets and initiates translation of a subset of mRNAs involved in cell proliferation. The sequence is that of Eukaryotic translation initiation factor 3 subunit H from Aspergillus clavatus (strain ATCC 1007 / CBS 513.65 / DSM 816 / NCTC 3887 / NRRL 1 / QM 1276 / 107).